Reading from the N-terminus, the 122-residue chain is Large ribosomal subunit protein uL14 (122 aa).

Belongs to the universal ribosomal protein uL14 family. As to quaternary structure, part of the 50S ribosomal subunit. Forms a cluster with proteins L3 and L19. In the 70S ribosome, L14 and L19 interact and together make contacts with the 16S rRNA in bridges B5 and B8.

Its function is as follows. Binds to 23S rRNA. Forms part of two intersubunit bridges in the 70S ribosome. The protein is Large ribosomal subunit protein uL14 of Methylibium petroleiphilum (strain ATCC BAA-1232 / LMG 22953 / PM1).